A 358-amino-acid chain; its full sequence is Peptide chain release factor 1 (358 aa).

At Gln-233 the chain carries N5-methylglutamine.

The protein belongs to the prokaryotic/mitochondrial release factor family. Post-translationally, methylated by PrmC. Methylation increases the termination efficiency of RF1.

The protein resides in the cytoplasm. In terms of biological role, peptide chain release factor 1 directs the termination of translation in response to the peptide chain termination codons UAG and UAA. The chain is Peptide chain release factor 1 from Listeria monocytogenes serotype 4b (strain CLIP80459).